The chain runs to 726 residues: Methyltransferase FGSG_00040 (726 aa).

TPR repeat units follow at residues 187–220, 224–257, and 258–291; these read SSDI…GQNV, QLAF…AMPS, and EKSL…YPEN. One can recognise an SET domain in the interval 336 to 531; it reads APVEIRESPG…AKTEIFFCYR (196 aa). Tyrosine 530 is a binding site for S-adenosyl-L-methionine.

This sequence belongs to the class V-like SAM-binding methyltransferase superfamily.

It functions in the pathway mycotoxin biosynthesis. In terms of biological role, methyltransferase; part of the gene cluster that mediates the biosynthesis of gramillins A and B, bicyclic lipopeptides that induce cell death in maize leaves but not in wheat leaves. The nonribosomal peptide synthetase GRA1 incorporates respectively a glutamic adic (Glu), a leucine (Leu), a serine (Ser), a hydroxyglutamine (HOGln), a 2-amino decanoic acid, and 2 cysteins (CysB and CysA). The biosynthesis of 2-amino decanoic acid incorporated in gramillins could be initiated by a fatty acid synthase composed of the alpha and beta subunits FGSG_00036 and FGSG_11656. The cytochrome P450 monooxygenase FGSG_15680 could hydroxylate the fatty acid chain. Subsequent oxidation to the ketone by the oxidoreductase FGSG_00048 and transamination by aminotransferase FGSG_00049 could form 2-amino-decanoic acid. On the other hand, FGSG_15680 could also be responsible for the HO-modified glutamine at the gamma-position. Whether hydroxylation occurs on the fully assembled product or on the Gln residue prior to assembly into the gramillins requires further proof. The thioredoxin FGSG_00043 could also be required for the disulfide-bond formation between CysA and CysB. The specific involvement of the remaining proteins from the cluster is more difficult to discern, but could have broader regulatory (FGSG_00040 and FGSG_11657) or enzymatic functions (FGSG_00044 and FGSG_00045). The final C-domain of GRA1 does not possess the expected sequence of a termination CT domain, often implicated in macrocyclization and release of a cyclopeptidein fungal NRPs; and the thioesterase FGSG_00047 may act in concert with the terminal C-domain of GRA1 to catalyze the formation of the macrocyclic anhydride and release of the products. This Gibberella zeae (strain ATCC MYA-4620 / CBS 123657 / FGSC 9075 / NRRL 31084 / PH-1) (Wheat head blight fungus) protein is Methyltransferase FGSG_00040.